Consider the following 213-residue polypeptide: Ribosome maturation factor RimM (213 aa).

The PRC barrel domain maps to 99–175 (DQDAAYISDL…RITMRLPEGL (77 aa)). Residues 182-213 (TATAREPRARRTRKRGLRKPITGADATPPDSQ) form a disordered region. Residues 189–199 (RARRTRKRGLR) are compositionally biased toward basic residues.

The protein belongs to the RimM family. As to quaternary structure, binds ribosomal protein uS19.

The protein resides in the cytoplasm. Functionally, an accessory protein needed during the final step in the assembly of 30S ribosomal subunit, possibly for assembly of the head region. Essential for efficient processing of 16S rRNA. May be needed both before and after RbfA during the maturation of 16S rRNA. It has affinity for free ribosomal 30S subunits but not for 70S ribosomes. This chain is Ribosome maturation factor RimM, found in Acidobacterium capsulatum (strain ATCC 51196 / DSM 11244 / BCRC 80197 / JCM 7670 / NBRC 15755 / NCIMB 13165 / 161).